The primary structure comprises 796 residues: Armadillo repeat-containing protein wrm-1 (796 aa).

The disordered stretch occupies residues 17 to 59 (NFNPMTPSTSRVSTPVRPSSTMSARQYSGSPFKAQPQNMEPSN). The ARM repeat unit spans residues 462-504 (ESIHCIVQLIGCSDVTIVELATGTLRNIGLHNKMNKAFMVQDG).

In terms of assembly, interacts (independently of ARM repeat) with nhr-25. Component of the beta-catenin-lit-1 complex (also called the lit-1/wrm-1 complex or the wrm-1/lit-1 kinase complex) at least composed of lit-1 and wrm-1. Interacts (via N-terminus) with lit-1; the interaction is direct and activates lit-1 kinase activity which leads to the phosphorylation of pop-1. This promotes pop-1 interaction with par-5 and translocation of pop-1 from the nucleus to the cytoplasm.

The protein resides in the cytoplasm. It is found in the cell cortex. The protein localises to the nucleus. In terms of biological role, antagonistic role in the Wnt signaling pathway that operates in embryogenesis. When located at the cortex it has been shown to inhibit Wnt signaling during asymmetric cell division but when relocated to the nucleus it shows positive regulation. Has a role in blastomere signaling during endoderm specification. Component of the beta-catenin-lit-1 complex which promotes phosphorylation, down-regulation and subcellular relocation of pop-1. Within the complex, activates lit-1-dependent kinase activity. Can substitute for bar-1 indicating functional redundancy. Appears to have a role in centrosome positioning and can activation transcription in yeast. Involved in the development of distal tip cells (DTC) by regulating the asymmetric distribution of cye-1 and cki-1 between the daughters of Z1.a and Z4.p cells. The chain is Armadillo repeat-containing protein wrm-1 from Caenorhabditis elegans.